Reading from the N-terminus, the 358-residue chain is Magnesium-protoporphyrin IX monomethyl ester [oxidative] cyclase 2 (358 aa).

The protein belongs to the AcsF family. Fe cation serves as cofactor.

It carries out the reaction Mg-protoporphyrin IX 13-monomethyl ester + 3 NADPH + 3 O2 + 2 H(+) = 3,8-divinyl protochlorophyllide a + 3 NADP(+) + 5 H2O. The protein operates within porphyrin-containing compound metabolism; chlorophyll biosynthesis (light-independent). In terms of biological role, catalyzes the formation of the isocyclic ring in chlorophyll biosynthesis. Mediates the cyclase reaction, which results in the formation of divinylprotochlorophyllide (Pchlide) characteristic of all chlorophylls from magnesium-protoporphyrin IX 13-monomethyl ester (MgPMME). The protein is Magnesium-protoporphyrin IX monomethyl ester [oxidative] cyclase 2 of Nostoc sp. (strain PCC 7120 / SAG 25.82 / UTEX 2576).